Reading from the N-terminus, the 344-residue chain is MHGILRVKLSEEQRKLKAEKERAKIEEYRGLVSRFQEARKRKDYSEGNLKLTTELLDWNPETYSVWNYRREILLNDVFPKISLNEKQDLLDNELKYVLSKMKVFPKVYWIFNHRRWCLENAPYPNWNYEMMITEKLLSADARNFHGWHYRRYVVSQIERAGNCSLAKKEMEYTTSAIATNFSNFSALHNRTKLIETILNLEADPNSQKALAKQILEQELDMIHQAVFTDPDDSSVWIYHRWLMGHCNPNSMTPLISMITIEERIQYLQKEIELIQELHEMEPENRWCCESLVNYEALCKTLEKQKPTEADIKRWTLLVDKMIKVDPQRRGRYRTLQEKINNLNK.

PFTA repeat units follow at residues Tyr44–Phe78, Leu89–Tyr123, Asn125–Arg159, Leu165–Asn199, Ile214–Pro248, and Tyr266–Asn293.

The protein belongs to the protein prenyltransferase subunit alpha family. As to quaternary structure, heterodimer of an alpha and a beta subunit.

The catalysed reaction is geranylgeranyl diphosphate + L-cysteinyl-[protein] = S-geranylgeranyl-L-cysteinyl-[protein] + diphosphate. Functionally, catalyzes the transfer of a geranyl-geranyl moiety from geranyl-geranyl pyrophosphate to proteins having the C-terminal-XCC or -XCXC, where both cysteines may become modified. This Schizosaccharomyces pombe (strain 972 / ATCC 24843) (Fission yeast) protein is Geranylgeranyl transferase type-2 subunit alpha (bet4).